The chain runs to 141 residues: Translation initiation factor IF-1, chloroplastic (141 aa).

The transit peptide at 1–46 (MLQLCSTFRPQLLLPCQFRFTNGVLIPQINYVASNSVVNIRPMIRC) directs the protein to the chloroplast. A disordered region spans residues 49–69 (ASGGRGGANRSKPAKPQVKEG). An S1-like domain is found at 63 to 138 (KPQVKEGSNK…TKGRIIFRMS (76 aa)).

Belongs to the IF-1 family. In terms of assembly, component of the 30S ribosomal translation pre-initiation complex which assembles on the 30S ribosome in the order IF-2 and IF-3, IF-1 and N-formylmethionyl-tRNA(fMet); mRNA recruitment can occur at any time during PIC assembly.

It localises to the plastid. The protein resides in the chloroplast. One of the essential components for the initiation of protein synthesis. Stabilizes the binding of IF-2 and IF-3 on the 30S subunit to which N-formylmethionyl-tRNA(fMet) subsequently binds. Helps modulate mRNA selection, yielding the 30S pre-initiation complex (PIC). Upon addition of the 50S ribosomal subunit IF-1, IF-2 and IF-3 are released leaving the mature 70S translation initiation complex. The chain is Translation initiation factor IF-1, chloroplastic from Arabidopsis thaliana (Mouse-ear cress).